The sequence spans 379 residues: Cobalt-precorrin-5B C(1)-methyltransferase (379 aa).

This sequence belongs to the CbiD family.

It catalyses the reaction Co-precorrin-5B + S-adenosyl-L-methionine = Co-precorrin-6A + S-adenosyl-L-homocysteine. Its pathway is cofactor biosynthesis; adenosylcobalamin biosynthesis; cob(II)yrinate a,c-diamide from sirohydrochlorin (anaerobic route): step 6/10. In terms of biological role, catalyzes the methylation of C-1 in cobalt-precorrin-5B to form cobalt-precorrin-6A. The chain is Cobalt-precorrin-5B C(1)-methyltransferase from Citrobacter koseri (strain ATCC BAA-895 / CDC 4225-83 / SGSC4696).